Reading from the N-terminus, the 197-residue chain is Segregation and condensation protein B (197 aa).

This sequence belongs to the ScpB family. Homodimer. Homodimerization may be required to stabilize the binding of ScpA to the Smc head domains. Component of a cohesin-like complex composed of ScpA, ScpB and the Smc homodimer, in which ScpA and ScpB bind to the head domain of Smc. The presence of the three proteins is required for the association of the complex with DNA.

The protein localises to the cytoplasm. In terms of biological role, participates in chromosomal partition during cell division. May act via the formation of a condensin-like complex containing Smc and ScpA that pull DNA away from mid-cell into both cell halves. The sequence is that of Segregation and condensation protein B from Bacillus licheniformis (strain ATCC 14580 / DSM 13 / JCM 2505 / CCUG 7422 / NBRC 12200 / NCIMB 9375 / NCTC 10341 / NRRL NRS-1264 / Gibson 46).